We begin with the raw amino-acid sequence, 280 residues long: Putative sugar uptake protein (280 aa).

Transmembrane regions (helical) follow at residues 4–21, 33–52, 56–78, 91–113, 117–136, 149–166, 176–195, 207–229, 233–255, and 262–279; these read LIALIPALGWGIFSLIAG, MGLGTGALIIGIITAIIHPA, ITIFSLSLISGMFCALGQSGQFI, LSTGFQLIGNTLIGAIIFGEWTS, YLIGTLALILIIVGVSLTAI, IILLLFTSIGYWIYSSFP, LFLPQMIGIFIGSIIFLLVS, WLNIFSGFSYGIAAFSYIFSAQL, ITAFIYSQLCVIISTLGGIFFIG, and ELIATFVGLILIIIGAAI.

Belongs to the GRP transporter (TC 2.A.7.5) family.

Its subcellular location is the cell membrane. This Lactobacillus helveticus (Lactobacillus suntoryeus) protein is Putative sugar uptake protein.